A 78-amino-acid polypeptide reads, in one-letter code: uncharacterized protein (78 aa).

A disordered region spans residues 49–78 (QRASLERSNSIRNLQSQGKRRSDSKESRKL). Over residues 54 to 65 (ERSNSIRNLQSQ) the composition is skewed to polar residues. Over residues 68-78 (RRSDSKESRKL) the composition is skewed to basic and acidic residues.

This is an uncharacterized protein from Saccharomyces cerevisiae (strain ATCC 204508 / S288c) (Baker's yeast).